Here is a 331-residue protein sequence, read N- to C-terminus: Geranylgeranyl transferase type-2 subunit beta (331 aa).

Gly2 bears the N-acetylglycine mark. Residue Thr3 is modified to Phosphothreonine. 6 PFTB repeats span residues 20-61 (LEKH…DLMG), 68-109 (REEI…TLYD), 116-157 (INKV…ALLG), 164-205 (VEKA…AITS), 212-253 (SDLL…KIIG), and 260-302 (REKL…SLLG). 190 to 192 (HAG) contributes to the geranylgeranyl diphosphate binding site. Asp238 and Cys240 together coordinate Zn(2+). 241 to 244 (YSWW) contributes to the geranylgeranyl diphosphate binding site. His290 provides a ligand contact to Zn(2+).

It belongs to the protein prenyltransferase subunit beta family. Heterotrimer composed of RABGGTA, RABGGTB and CHM; within this trimer, RABGGTA and RABGGTB form the catalytic component B, while CHM (component A) mediates peptide substrate binding. The Rab GGTase dimer (RGGT) interacts with CHM (component A) prior to Rab protein binding; the association is stabilized by geranylgeranyl pyrophosphate (GGpp). The CHM:RGGT:Rab complex is destabilized by GGpp. Interaction of RABGGTB with prenylated PTP4A2 precludes its association with RABGGTA and inhibits enzyme activity. Interacts with CHODL. Interacts with non-phosphorylated form of RAB8A; phosphorylation of RAB8A at 'Thr-72' disrupts this interaction. Requires Zn(2+) as cofactor.

It carries out the reaction geranylgeranyl diphosphate + L-cysteinyl-[protein] = S-geranylgeranyl-L-cysteinyl-[protein] + diphosphate. With respect to regulation, the enzymatic reaction requires the aid of a Rab escort protein (also called component A). Its function is as follows. Catalyzes the transfer of a geranylgeranyl moiety from geranylgeranyl diphosphate to both cysteines of Rab proteins with the C-terminal sequence -XXCC, -XCXC and -CCXX, such as RAB1A, RAB3A, RAB5A and RAB7A. This Bos taurus (Bovine) protein is Geranylgeranyl transferase type-2 subunit beta (RABGGTB).